The primary structure comprises 89 residues: MGFTDETVRFKLDDGDKKEISETLTAVYHSLEEKGYNPINQIVGYVLSGDPAYVPRYNDARNQIRKYERDEIVEELVRYYLQGNGIDVK.

Belongs to the UPF0297 family.

The polypeptide is UPF0297 protein SUB1776 (Streptococcus uberis (strain ATCC BAA-854 / 0140J)).